Reading from the N-terminus, the 379-residue chain is Succinyl-diaminopimelate desuccinylase (379 aa).

Histidine 70 provides a ligand contact to Zn(2+). Aspartate 72 is a catalytic residue. Residue aspartate 103 participates in Zn(2+) binding. The active-site Proton acceptor is glutamate 137. 3 residues coordinate Zn(2+): glutamate 138, glutamate 166, and histidine 352.

Belongs to the peptidase M20A family. DapE subfamily. In terms of assembly, homodimer. Requires Zn(2+) as cofactor. Co(2+) is required as a cofactor.

It carries out the reaction N-succinyl-(2S,6S)-2,6-diaminopimelate + H2O = (2S,6S)-2,6-diaminopimelate + succinate. It participates in amino-acid biosynthesis; L-lysine biosynthesis via DAP pathway; LL-2,6-diaminopimelate from (S)-tetrahydrodipicolinate (succinylase route): step 3/3. Catalyzes the hydrolysis of N-succinyl-L,L-diaminopimelic acid (SDAP), forming succinate and LL-2,6-diaminopimelate (DAP), an intermediate involved in the bacterial biosynthesis of lysine and meso-diaminopimelic acid, an essential component of bacterial cell walls. This is Succinyl-diaminopimelate desuccinylase from Burkholderia mallei (strain NCTC 10247).